The following is a 338-amino-acid chain: Nickel transporter NixA (338 aa).

8 consecutive transmembrane segments (helical) span residues 11-31, 37-57, 79-99, 127-147, 187-207, 217-237, 266-286, and 307-327; these read WLPY…FLWI, HILF…AFDA, GVGF…AVFL, FFLV…INLF, VLPL…IALL, AISF…MSLL, ITAI…LQIL, and YLGY…SLIW.

Belongs to the NiCoT transporter (TC 2.A.52) family.

Its subcellular location is the cell membrane. Functionally, secondary nickel transporter. Required for full urease activity. This chain is Nickel transporter NixA, found in Staphylococcus aureus (strain NCTC 8325 / PS 47).